The sequence spans 269 residues: Phosphonates import ATP-binding protein PhnC 2 (269 aa).

The 245-residue stretch at 2 to 246 (LRIDSLSKRY…VLNEIYGEED (245 aa)) folds into the ABC transporter domain. Residue 35–42 (GPSGAGKS) coordinates ATP. The disordered stretch occupies residues 246–269 (DWNASGPAQDSEENEAVSAGVATH).

The protein belongs to the ABC transporter superfamily. Phosphonates importer (TC 3.A.1.9.1) family. In terms of assembly, the complex is composed of two ATP-binding proteins (PhnC), two transmembrane proteins (PhnE) and a solute-binding protein (PhnD).

Its subcellular location is the cell inner membrane. The catalysed reaction is phosphonate(out) + ATP + H2O = phosphonate(in) + ADP + phosphate + H(+). In terms of biological role, part of the ABC transporter complex PhnCDE involved in phosphonates import. Responsible for energy coupling to the transport system. The chain is Phosphonates import ATP-binding protein PhnC 2 from Synechococcus sp. (strain JA-2-3B'a(2-13)) (Cyanobacteria bacterium Yellowstone B-Prime).